The sequence spans 379 residues: Anhydro-N-acetylmuramic acid kinase (379 aa).

9–16 (GTSADGVD) is an ATP binding site.

It belongs to the anhydro-N-acetylmuramic acid kinase family.

The enzyme catalyses 1,6-anhydro-N-acetyl-beta-muramate + ATP + H2O = N-acetyl-D-muramate 6-phosphate + ADP + H(+). The protein operates within amino-sugar metabolism; 1,6-anhydro-N-acetylmuramate degradation. It functions in the pathway cell wall biogenesis; peptidoglycan recycling. Functionally, catalyzes the specific phosphorylation of 1,6-anhydro-N-acetylmuramic acid (anhMurNAc) with the simultaneous cleavage of the 1,6-anhydro ring, generating MurNAc-6-P. Is required for the utilization of anhMurNAc either imported from the medium or derived from its own cell wall murein, and thus plays a role in cell wall recycling. This Parasynechococcus marenigrum (strain WH8102) protein is Anhydro-N-acetylmuramic acid kinase.